The sequence spans 156 residues: uncharacterized protein (156 aa).

The next 5 membrane-spanning stretches (helical) occupy residues 6-26, 34-54, 68-88, 100-120, and 129-149; these read LIVL…PYFA, FWKF…HQMP, CARC…YPFI, WYLI…LIGL, and FITG…IFFE.

It is found in the cell membrane. This is an uncharacterized protein from Methanocaldococcus jannaschii (strain ATCC 43067 / DSM 2661 / JAL-1 / JCM 10045 / NBRC 100440) (Methanococcus jannaschii).